The following is a 67-amino-acid chain: ECENTECPRACPGEYEFDEDGCNTCVCKGCDDAQCRCSSDANGCESFCTCNTRCSAADECNPRCTCK.

An Antistasin-like domain is found at 2 to 27 (CENTECPRACPGEYEFDEDGCNTCVC).

As to quaternary structure, homodimer. In terms of processing, eight disulfide bonds are present.

It localises to the secreted. Its function is as follows. Potent thrombin-specific inhibitor. The chain is Theromin from Theromyzon tessulatum (Duck leech).